A 450-amino-acid polypeptide reads, in one-letter code: UDP-N-acetylmuramoylalanine--D-glutamate ligase (450 aa).

An ATP-binding site is contributed by 119–125 (GSNGKTT).

This sequence belongs to the MurCDEF family.

It localises to the cytoplasm. It catalyses the reaction UDP-N-acetyl-alpha-D-muramoyl-L-alanine + D-glutamate + ATP = UDP-N-acetyl-alpha-D-muramoyl-L-alanyl-D-glutamate + ADP + phosphate + H(+). It participates in cell wall biogenesis; peptidoglycan biosynthesis. Its function is as follows. Cell wall formation. Catalyzes the addition of glutamate to the nucleotide precursor UDP-N-acetylmuramoyl-L-alanine (UMA). The chain is UDP-N-acetylmuramoylalanine--D-glutamate ligase from Streptococcus pneumoniae (strain JJA).